Here is a 1181-residue protein sequence, read N- to C-terminus: DNA-directed RNA polymerase subunit beta' (1181 aa).

Zn(2+) contacts are provided by Cys68, Cys70, Cys83, and Cys86. Residues Asp457, Asp459, and Asp461 each coordinate Mg(2+). The Zn(2+) site is built by Cys802, Cys876, Cys883, and Cys886.

This sequence belongs to the RNA polymerase beta' chain family. In terms of assembly, the RNAP catalytic core consists of 2 alpha, 1 beta, 1 beta' and 1 omega subunit. When a sigma factor is associated with the core the holoenzyme is formed, which can initiate transcription. Mg(2+) serves as cofactor. Requires Zn(2+) as cofactor.

The enzyme catalyses RNA(n) + a ribonucleoside 5'-triphosphate = RNA(n+1) + diphosphate. DNA-dependent RNA polymerase catalyzes the transcription of DNA into RNA using the four ribonucleoside triphosphates as substrates. This is DNA-directed RNA polymerase subunit beta' from Syntrophomonas wolfei subsp. wolfei (strain DSM 2245B / Goettingen).